Here is an 818-residue protein sequence, read N- to C-terminus: Glycogen phosphorylase (818 aa).

Lys667 carries the N6-(pyridoxal phosphate)lysine modification.

The protein belongs to the glycogen phosphorylase family. The cofactor is pyridoxal 5'-phosphate.

It catalyses the reaction [(1-&gt;4)-alpha-D-glucosyl](n) + phosphate = [(1-&gt;4)-alpha-D-glucosyl](n-1) + alpha-D-glucose 1-phosphate. Phosphorylase is an important allosteric enzyme in carbohydrate metabolism. Enzymes from different sources differ in their regulatory mechanisms and in their natural substrates. However, all known phosphorylases share catalytic and structural properties. In Pasteurella multocida (strain Pm70), this protein is Glycogen phosphorylase (glgP).